The sequence spans 198 residues: Clytin (198 aa).

Residues 1–9 (MADTASKYA) constitute a propeptide that is removed on maturation. EF-hand domains lie at 20–55 (KWVN…DICA), 60–95 (TPEQ…VDGW), 119–148 (EAVF…SGIC), and 149–184 (SSDE…FWYT). Residues Asp33, Asn35, Asp37, Lys39, and Glu44 each coordinate Ca(2+). Residues Asp126, Asp128, Ser130, Ser132, Glu137, Asp162, Asp164, Ser166, Lys168, and Glu173 each contribute to the Ca(2+) site.

This sequence belongs to the aequorin family.

Ca(2+)-dependent bioluminescence photoprotein. Displays an emission peak at 470 nm (blue light). Trace amounts of calcium ion trigger the intramolecular oxidation of the chromophore, coelenterazine into coelenteramide and CO(2) with the concomitant emission of light. This chain is Clytin, found in Clytia gregaria (Gregarious jellyfish).